The following is a 563-amino-acid chain: 2-isopropylmalate synthase (563 aa).

A Pyruvate carboxyltransferase domain is found at 31–305 (PIWMSTDLRD…DPGLDFAQIN (275 aa)). 4 residues coordinate Mg(2+): aspartate 40, histidine 244, histidine 246, and asparagine 280. The regulatory domain stretch occupies residues 437–563 (RAEPIEYLSH…EWARLCGGAE (127 aa)).

Belongs to the alpha-IPM synthase/homocitrate synthase family. LeuA type 2 subfamily. Homodimer. Mg(2+) is required as a cofactor.

It is found in the cytoplasm. The catalysed reaction is 3-methyl-2-oxobutanoate + acetyl-CoA + H2O = (2S)-2-isopropylmalate + CoA + H(+). The protein operates within amino-acid biosynthesis; L-leucine biosynthesis; L-leucine from 3-methyl-2-oxobutanoate: step 1/4. Its function is as follows. Catalyzes the condensation of the acetyl group of acetyl-CoA with 3-methyl-2-oxobutanoate (2-ketoisovalerate) to form 3-carboxy-3-hydroxy-4-methylpentanoate (2-isopropylmalate). This Parvibaculum lavamentivorans (strain DS-1 / DSM 13023 / NCIMB 13966) protein is 2-isopropylmalate synthase.